Reading from the N-terminus, the 166-residue chain is Large ribosomal subunit protein uL10 (166 aa).

The protein belongs to the universal ribosomal protein uL10 family. Part of the ribosomal stalk of the 50S ribosomal subunit. The N-terminus interacts with L11 and the large rRNA to form the base of the stalk. The C-terminus forms an elongated spine to which L12 dimers bind in a sequential fashion forming a multimeric L10(L12)X complex.

In terms of biological role, forms part of the ribosomal stalk, playing a central role in the interaction of the ribosome with GTP-bound translation factors. The protein is Large ribosomal subunit protein uL10 of Flavobacterium psychrophilum (strain ATCC 49511 / DSM 21280 / CIP 103535 / JIP02/86).